Here is a 426-residue protein sequence, read N- to C-terminus: tRNA methyltransferase 10 homolog C (426 aa).

The N-terminal 41 residues, 1–41, are a transit peptide targeting the mitochondrion; the sequence is MPVLLKMSVSITFLRPFARVLVPFTLHRKRRVLYSTIMQRY. A Phosphoserine modification is found at serine 86. The stretch at 138 to 166 forms a coiled coil; the sequence is LYIKEKMKKARQIKKEMKKAEKEEPKKDQ. An SAM-dependent MTase TRM10-type domain is found at 193-385; that stretch reads MGWKGAQAMQ…KFVPSRKHAG (193 aa).

The protein belongs to the class IV-like SAM-binding methyltransferase superfamily. TRM10 family. Component of mitochondrial ribonuclease P, a complex composed of TRMT10C/MRPP1, HSD17B10/MRPP2 and PRORP/MRPP3. Interacts with HSD17B10/MRPP2; forming the MRPP1-MRPP2 subcomplex of the mitochondrial ribonuclease P complex. Interacts with GRSF1.

Its subcellular location is the mitochondrion matrix. It localises to the mitochondrion nucleoid. The catalysed reaction is adenosine(9) in tRNA + S-adenosyl-L-methionine = N(1)-methyladenosine(9) in tRNA + S-adenosyl-L-homocysteine + H(+). It carries out the reaction guanosine(9) in tRNA + S-adenosyl-L-methionine = N(1)-methylguanosine(9) in tRNA + S-adenosyl-L-homocysteine + H(+). The enzyme catalyses an adenosine in mRNA + S-adenosyl-L-methionine = an N(1)-methyladenosine in mRNA + S-adenosyl-L-homocysteine + H(+). In terms of biological role, mitochondrial tRNA N(1)-methyltransferase involved in mitochondrial tRNA maturation. Component of mitochondrial ribonuclease P, a complex composed of TRMT10C/MRPP1, HSD17B10/MRPP2 and PRORP/MRPP3, which cleaves tRNA molecules in their 5'-ends. Together with HSD17B10/MRPP2, forms a subcomplex of the mitochondrial ribonuclease P, named MRPP1-MRPP2 subcomplex, which displays functions that are independent of the ribonuclease P activity. The MRPP1-MRPP2 subcomplex catalyzes the formation of N(1)-methylguanine and N(1)-methyladenine at position 9 (m1G9 and m1A9, respectively) in tRNAs; TRMT10C/MRPP1 acting as the catalytic N(1)-methyltransferase subunit. The MRPP1-MRPP2 subcomplex also acts as a tRNA maturation platform: following 5'-end cleavage by the mitochondrial ribonuclease P complex, the MRPP1-MRPP2 subcomplex enhances the efficiency of 3'-processing catalyzed by ELAC2, retains the tRNA product after ELAC2 processing and presents the nascent tRNA to the mitochondrial CCA tRNA nucleotidyltransferase TRNT1 enzyme. In addition to tRNA N(1)-methyltransferase activity, TRMT10C/MRPP1 also acts as a mRNA N(1)-methyltransferase by mediating methylation of adenosine residues at the N(1) position of MT-ND5 mRNA. Associates with mitochondrial DNA complexes at the nucleoids to initiate RNA processing and ribosome assembly. The polypeptide is tRNA methyltransferase 10 homolog C (Bos taurus (Bovine)).